The primary structure comprises 280 residues: Ribosomal RNA small subunit methyltransferase I (280 aa).

This sequence belongs to the methyltransferase superfamily. RsmI family.

Its subcellular location is the cytoplasm. The enzyme catalyses cytidine(1402) in 16S rRNA + S-adenosyl-L-methionine = 2'-O-methylcytidine(1402) in 16S rRNA + S-adenosyl-L-homocysteine + H(+). In terms of biological role, catalyzes the 2'-O-methylation of the ribose of cytidine 1402 (C1402) in 16S rRNA. In Rickettsia prowazekii (strain Madrid E), this protein is Ribosomal RNA small subunit methyltransferase I.